Reading from the N-terminus, the 321-residue chain is XylDLEGF operon transcriptional activator 1 (321 aa).

In terms of domain architecture, HTH araC/xylS-type spans 214–315 (ERVVQFIEEN…GELPSDTLRQ (102 aa)). DNA-binding regions (H-T-H motif) lie at residues 231–252 (ERLA…EKHA) and 282–305 (ITEI…RSAF).

Its subcellular location is the cytoplasm. In terms of biological role, regulatory protein of the TOL plasmid xyl operons. XylS activates the xylXYZLTEGFJQKIH operon required for the degradation of toluene, m-xylene and p-xylene. This Pseudomonas putida (Arthrobacter siderocapsulatus) protein is XylDLEGF operon transcriptional activator 1 (xylS1).